A 235-amino-acid chain; its full sequence is MKEENWNNNLEQMMEAGVHFGHQARKWNPKIAPYLLKDTKKIRIIHITHTARLLADACDFATNAAREGKQFMLVGTRYQTAGLVATTAKKARCHYVNTKWLGGMLTNWSTIKTRLQKFEQLEAQEIAGAFNHLPKKEVAVMKRQLSQLRKYFHGIKYMKKVPDIVIFINQHQDYTAIQECIKLGIPTIGLVDTDCDPNLVDMPIPANDDNRTSIRWILSQLTTAIKEGRSTSLKQ.

It belongs to the universal ribosomal protein uS2 family.

The protein localises to the plastid. The protein resides in the chloroplast. The sequence is that of Small ribosomal subunit protein uS2c (rps2) from Zygnema circumcarinatum (Green alga).